The primary structure comprises 353 residues: Stearoyl-CoA desaturase 4 (353 aa).

The tract at residues 1–42 (MTAHLPQEISSRCSTTNIMEPHSRRQQDGEEKMPLQAEDIRP) is disordered. The Cytoplasmic portion of the chain corresponds to 1–66 (MTAHLPQEIS…EGPPPKLEYV (66 aa)). Residues 8-18 (EISSRCSTTNI) show a composition bias toward polar residues. The segment covering 21-42 (PHSRRQQDGEEKMPLQAEDIRP) has biased composition (basic and acidic residues). A helical membrane pass occupies residues 67–87 (WRNIIFMALLHVGALYGITLV). A substrate-binding site is contributed by Asn69. Residues 88–91 (PSCK) are Lumenal-facing. The chain crosses the membrane as a helical span at residues 92–112 (VYTWLLGVFYNVVAGLGITAG). Topologically, residues 113–211 (AHRLWSHRTY…EKLVMFQRRY (99 aa)) are cytoplasmic. Fe cation is bound by residues His114 and His119. The Histidine box-1 signature appears at 114 to 119 (HRLWSH). Substrate-binding residues include Asn142, Arg149, and Asp150. Residues His151, His154, and His155 each contribute to the Fe cation site. The short motif at 151 to 155 (HRAHH) is the Histidine box-2 element. Residues Arg182 and Lys183 each contribute to the substrate site. A helical transmembrane segment spans residues 212 to 231 (YKLAVTLMFIILPTLVPWYL). The Lumenal segment spans residues 232 to 235 (WGET). The helical transmembrane segment at 236–257 (FQHSLCVSNFLRYAVLLNFTWL) threads the bilayer. Residue Trp256 participates in substrate binding. Residues 258–353 (VNSAAHLYGY…RTGDGSHKSS (96 aa)) lie on the Cytoplasmic side of the membrane. Fe cation-binding residues include His263, His292, His295, and His296. Residues 292–296 (HNYHH) carry the Histidine box-3 motif.

The protein belongs to the fatty acid desaturase type 1 family. Requires Fe(2+) as cofactor. Detected in heart, but not in brain, liver, skin or adipose tissue.

The protein localises to the endoplasmic reticulum membrane. It localises to the microsome membrane. The enzyme catalyses octadecanoyl-CoA + 2 Fe(II)-[cytochrome b5] + O2 + 2 H(+) = (9Z)-octadecenoyl-CoA + 2 Fe(III)-[cytochrome b5] + 2 H2O. The catalysed reaction is hexadecanoyl-CoA + 2 Fe(II)-[cytochrome b5] + O2 + 2 H(+) = (9Z)-hexadecenoyl-CoA + 2 Fe(III)-[cytochrome b5] + 2 H2O. Stearoyl-CoA desaturase that utilizes O(2) and electrons from reduced cytochrome b5 to introduce the first double bond into saturated fatty acyl-CoA substrates. Catalyzes the insertion of a cis double bond at the delta-9 position into fatty acyl-CoA substrates including palmitoyl-CoA and stearoyl-CoA. Required for the biosynthesis of membrane phospholipids, cholesterol esters and triglycerides. The protein is Stearoyl-CoA desaturase 4 of Mus musculus (Mouse).